Here is a 105-residue protein sequence, read N- to C-terminus: Probable tetrachloroethene reductive dehalogenase membrane anchor protein (105 aa).

3 helical membrane-spanning segments follow: residues 3–23, 35–55, and 66–86; these read IYDVLIWMALGMIALLIQYGI, IPLQICGFLANFFFIFALAWG, and AIGMGFIFFGGTALIPAIITY.

The protein belongs to the PceB family.

The protein localises to the cell membrane. Its function is as follows. May act as a membrane anchor for the tetrachloroethene reductive dehalogenase PceA. The sequence is that of Probable tetrachloroethene reductive dehalogenase membrane anchor protein from Desulfitobacterium hafniense (Desulfitobacterium frappieri).